Here is a 180-residue protein sequence, read N- to C-terminus: Fucolectin-2 (180 aa).

The signal sequence occupies residues 1–22 (MKVKMIMLLFQILAILTLKSDS). The interval 31-179 (QENVALRGRA…VEVNVLFPAP (149 aa)) is F5/8 type C-like. Positions 58, 61, 63, and 72 each coordinate Ca(2+). Disulfide bonds link C73–C168, C104–C105, and C130–C146. Positions 75 and 101 each coordinate alpha-L-fucose. A Cell attachment site motif is present at residues 101–103 (RGD). Residue R108 coordinates alpha-L-fucose. Ca(2+) is bound by residues C168 and E169.

This sequence belongs to the fucolectin family. Homotrimer. Parenchymal hepatocytes.

The protein localises to the secreted. The protein resides in the extracellular space. Acts as a defensive agent. Recognizes blood group fucosylated oligosaccharides including A, B, H and Lewis B-type antigens. Does not recognize Lewis A antigen and has low affinity for monovalent haptens. The polypeptide is Fucolectin-2 (Anguilla japonica (Japanese eel)).